The primary structure comprises 754 residues: 1,4-alpha-glucan branching enzyme GlgB (754 aa).

Asp-431 (nucleophile) is an active-site residue. Glu-484 serves as the catalytic Proton donor.

This sequence belongs to the glycosyl hydrolase 13 family. GlgB subfamily. Monomer.

The catalysed reaction is Transfers a segment of a (1-&gt;4)-alpha-D-glucan chain to a primary hydroxy group in a similar glucan chain.. It functions in the pathway glycan biosynthesis; glycogen biosynthesis. Functionally, catalyzes the formation of the alpha-1,6-glucosidic linkages in glycogen by scission of a 1,4-alpha-linked oligosaccharide from growing alpha-1,4-glucan chains and the subsequent attachment of the oligosaccharide to the alpha-1,6 position. The chain is 1,4-alpha-glucan branching enzyme GlgB from Prochlorococcus marinus (strain AS9601).